The chain runs to 635 residues: Probable Xaa-Pro aminopeptidase P (635 aa).

Mn(2+) is bound by residues D432, D443, E541, and E555.

It belongs to the peptidase M24B family. It depends on Mn(2+) as a cofactor.

It catalyses the reaction Release of any N-terminal amino acid, including proline, that is linked to proline, even from a dipeptide or tripeptide.. Functionally, catalyzes the removal of a penultimate prolyl residue from the N-termini of peptides. This is Probable Xaa-Pro aminopeptidase P (AMPP) from Arthroderma gypseum (strain ATCC MYA-4604 / CBS 118893) (Microsporum gypseum).